The primary structure comprises 140 residues: Nucleoside diphosphate kinase (140 aa).

6 residues coordinate ATP: lysine 11, phenylalanine 59, arginine 87, threonine 93, arginine 104, and asparagine 114. The active-site Pros-phosphohistidine intermediate is the histidine 117.

This sequence belongs to the NDK family. Homotetramer. Requires Mg(2+) as cofactor.

It is found in the cytoplasm. It carries out the reaction a 2'-deoxyribonucleoside 5'-diphosphate + ATP = a 2'-deoxyribonucleoside 5'-triphosphate + ADP. It catalyses the reaction a ribonucleoside 5'-diphosphate + ATP = a ribonucleoside 5'-triphosphate + ADP. Functionally, major role in the synthesis of nucleoside triphosphates other than ATP. The ATP gamma phosphate is transferred to the NDP beta phosphate via a ping-pong mechanism, using a phosphorylated active-site intermediate. The chain is Nucleoside diphosphate kinase from Agrobacterium fabrum (strain C58 / ATCC 33970) (Agrobacterium tumefaciens (strain C58)).